A 275-amino-acid chain; its full sequence is Formamidopyrimidine-DNA glycosylase (275 aa).

Residue P2 is the Schiff-base intermediate with DNA of the active site. E3 (proton donor) is an active-site residue. Catalysis depends on K58, which acts as the Proton donor; for beta-elimination activity. DNA-binding residues include H91, R109, and K154. An FPG-type zinc finger spans residues 240-274 (AVYERAGLACRVCGTPIRRLVQGQRATYFCPHCQK). Residue R264 is the Proton donor; for delta-elimination activity of the active site.

The protein belongs to the FPG family. As to quaternary structure, monomer. Zn(2+) is required as a cofactor.

The enzyme catalyses Hydrolysis of DNA containing ring-opened 7-methylguanine residues, releasing 2,6-diamino-4-hydroxy-5-(N-methyl)formamidopyrimidine.. It catalyses the reaction 2'-deoxyribonucleotide-(2'-deoxyribose 5'-phosphate)-2'-deoxyribonucleotide-DNA = a 3'-end 2'-deoxyribonucleotide-(2,3-dehydro-2,3-deoxyribose 5'-phosphate)-DNA + a 5'-end 5'-phospho-2'-deoxyribonucleoside-DNA + H(+). Functionally, involved in base excision repair of DNA damaged by oxidation or by mutagenic agents. Acts as a DNA glycosylase that recognizes and removes damaged bases. Has a preference for oxidized purines, such as 7,8-dihydro-8-oxoguanine (8-oxoG). Has AP (apurinic/apyrimidinic) lyase activity and introduces nicks in the DNA strand. Cleaves the DNA backbone by beta-delta elimination to generate a single-strand break at the site of the removed base with both 3'- and 5'-phosphates. The polypeptide is Formamidopyrimidine-DNA glycosylase (Bordetella avium (strain 197N)).